A 217-amino-acid chain; its full sequence is 7-cyano-7-deazaguanine synthase (217 aa).

Position 7–17 (7–17 (LSGGMDSTTLL)) interacts with ATP. The Zn(2+) site is built by Cys183, Cys191, Cys194, and Cys197.

This sequence belongs to the QueC family. The cofactor is Zn(2+).

It carries out the reaction 7-carboxy-7-deazaguanine + NH4(+) + ATP = 7-cyano-7-deazaguanine + ADP + phosphate + H2O + H(+). The protein operates within purine metabolism; 7-cyano-7-deazaguanine biosynthesis. Functionally, catalyzes the ATP-dependent conversion of 7-carboxy-7-deazaguanine (CDG) to 7-cyano-7-deazaguanine (preQ(0)). The polypeptide is 7-cyano-7-deazaguanine synthase (Methanoregula boonei (strain DSM 21154 / JCM 14090 / 6A8)).